We begin with the raw amino-acid sequence, 142 residues long: Transcriptional regulator MraZ (142 aa).

SpoVT-AbrB domains lie at 5-47 (THTP…PTPE) and 76-119 (AHDE…DRVA).

Belongs to the MraZ family. As to quaternary structure, forms oligomers.

The protein resides in the cytoplasm. It is found in the nucleoid. This is Transcriptional regulator MraZ from Salinispora tropica (strain ATCC BAA-916 / DSM 44818 / JCM 13857 / NBRC 105044 / CNB-440).